We begin with the raw amino-acid sequence, 194 residues long: Putative manganese efflux pump MntP (194 aa).

The next 6 helical transmembrane spans lie at 3 to 23, 37 to 57, 69 to 89, 110 to 132, 147 to 167, and 172 to 192; these read PFSIVLIGFAMSTDAFAAAIG, LRAGLIFGCIEAITPVIGWLL, DHWIAFVLLGALGTHMIVAGL, LGLATTGFATSIDAMAVGVSLAF, CTFSMVTAGVMLGRALGNLIG, and MLGGLILVIVGSVILYEHLSG.

This sequence belongs to the MntP (TC 9.B.29) family.

It localises to the cell inner membrane. Its function is as follows. Probably functions as a manganese efflux pump. This Xanthomonas euvesicatoria pv. vesicatoria (strain 85-10) (Xanthomonas campestris pv. vesicatoria) protein is Putative manganese efflux pump MntP.